We begin with the raw amino-acid sequence, 485 residues long: GTPase Der (485 aa).

EngA-type G domains lie at 3–167 (PTIA…PEPE) and 176–349 (PVFA…NAAM). GTP contacts are provided by residues 9-16 (GRPNVGKS), 56-60 (DTGGF), 119-122 (NKGE), 182-189 (GRPNVGKS), 229-233 (DTAGV), and 294-297 (NKWD). Residues 350–434 (IKMPTPKITR…PLRIQYNVSE (85 aa)) enclose the KH-like domain. Residues 435–485 (NPYENAEDKPKKKPLRRVSLSNRIEKREGRKEEKNRFKKKTKVSVKKQFSK) are disordered. Positions 457-469 (RIEKREGRKEEKN) are enriched in basic and acidic residues. The span at 470–485 (RFKKKTKVSVKKQFSK) shows a compositional bias: basic residues.

The protein belongs to the TRAFAC class TrmE-Era-EngA-EngB-Septin-like GTPase superfamily. EngA (Der) GTPase family. In terms of assembly, associates with the 50S ribosomal subunit.

In terms of biological role, GTPase that plays an essential role in the late steps of ribosome biogenesis. The protein is GTPase Der of Neisseria meningitidis serogroup C / serotype 2a (strain ATCC 700532 / DSM 15464 / FAM18).